Reading from the N-terminus, the 367-residue chain is Leu/Ile/Val-binding protein (367 aa).

Residues Met1–Ala23 form the signal peptide. Cysteines 76 and 101 form a disulfide.

Belongs to the leucine-binding protein family.

Its subcellular location is the periplasm. Its function is as follows. This protein is a component of the leucine, isoleucine, valine, (threonine) transport system, which is one of the two periplasmic binding protein-dependent transport systems of the high-affinity transport of the branched-chain amino acids. This Citrobacter freundii protein is Leu/Ile/Val-binding protein (livJ).